Reading from the N-terminus, the 272-residue chain is MSSGTVLDSILDGVRADVAAREAVVDLATVKAAAKAAPKPLDVMAALREPGIAVIAEVKRASPSRGALAEISDPAELAKAYEDGGARIISVLTEGRRFNGSLDDLDSVRAAVSVPVLRKDFVISPYQIHEARAHGADLILLIVAALEQTALVSLLDRTESLGMTALVEVHTEEEADRALSAGASVIGVNARDLKTLEIDRDCFSRIAPGLPSGVIRIAESGVRGTADLLAYAGAGADAVLVGEGLVTSGDPRGAVADLVTAGTHPSCPKPAR.

This sequence belongs to the TrpC family.

The catalysed reaction is 1-(2-carboxyphenylamino)-1-deoxy-D-ribulose 5-phosphate + H(+) = (1S,2R)-1-C-(indol-3-yl)glycerol 3-phosphate + CO2 + H2O. Its pathway is amino-acid biosynthesis; L-tryptophan biosynthesis; L-tryptophan from chorismate: step 4/5. The chain is Indole-3-glycerol phosphate synthase from Mycobacteroides abscessus (strain ATCC 19977 / DSM 44196 / CCUG 20993 / CIP 104536 / JCM 13569 / NCTC 13031 / TMC 1543 / L948) (Mycobacterium abscessus).